The sequence spans 359 residues: MGAMRDKILSVLEDYDKANIHIGTIGSHSALNILKGAKDEGFSTVCICREREKKVYESFGVADKFVIVSDYSDLLDENIQEELRHLNTILIPHGSFNAYIGKFDSLLLPMFGNRELMIWETDRDRQREWLERSGVRMPKKYSRPEEIEGLAIVKYPGAKGGKGYFIVSSPEEFYEISDEMVKKGLIGEEDIKNAEIQEYILGANIYFSFFYSPVYGRVELIAVDRRYESTADALGKVPAKEQIRANINPTYTVIGNFPVVLRESLLVQAFEAAEGIVEVSKEIAYPGMVGAFCIESIFDENALMYVFEISARIVAGTNVGIPTSPYSYILFGENMYMGRRIAREIKLAAEKDMLGELIY.

Positions 28 and 95 each coordinate 5-amino-1-(5-phospho-beta-D-ribosyl)imidazole-4-carboxamide. One can recognise an ATP-grasp domain in the interval 115–346 (ELMIWETDRD…MGRRIAREIK (232 aa)). ATP is bound by residues 144-206 (PEEI…ANIY) and Glu-228. A 5-amino-1-(5-phospho-beta-D-ribosyl)imidazole-4-carboxamide-binding site is contributed by Asn-256. Residues Glu-295 and Glu-308 each contribute to the Mg(2+) site.

Belongs to the phosphohexose mutase family. Mg(2+) is required as a cofactor. It depends on Mn(2+) as a cofactor.

The enzyme catalyses 5-amino-1-(5-phospho-beta-D-ribosyl)imidazole-4-carboxamide + formate + ATP = 5-formamido-1-(5-phospho-D-ribosyl)imidazole-4-carboxamide + ADP + phosphate. Its pathway is purine metabolism; IMP biosynthesis via de novo pathway; 5-formamido-1-(5-phospho-D-ribosyl)imidazole-4-carboxamide from 5-amino-1-(5-phospho-D-ribosyl)imidazole-4-carboxamide (formate route): step 1/1. Catalyzes the ATP- and formate-dependent formylation of 5-aminoimidazole-4-carboxamide-1-beta-d-ribofuranosyl 5'-monophosphate (AICAR) to 5-formaminoimidazole-4-carboxamide-1-beta-d-ribofuranosyl 5'-monophosphate (FAICAR) in the absence of folates. This Archaeoglobus fulgidus (strain ATCC 49558 / DSM 4304 / JCM 9628 / NBRC 100126 / VC-16) protein is 5-formaminoimidazole-4-carboxamide-1-(beta)-D-ribofuranosyl 5'-monophosphate synthetase.